The chain runs to 389 residues: Succinate--CoA ligase [ADP-forming] subunit beta (389 aa).

An ATP-grasp domain is found at 9-244 (KEILRKFGVA…LDEEDPAEVE (236 aa)). ATP contacts are provided by residues Lys-46, 53 to 55 (GRG), Glu-99, Ala-102, and Glu-107. Mg(2+) is bound by residues Asn-199 and Asp-213. Substrate-binding positions include Asn-264 and 321 to 323 (GIM).

It belongs to the succinate/malate CoA ligase beta subunit family. As to quaternary structure, heterotetramer of two alpha and two beta subunits. Requires Mg(2+) as cofactor.

The catalysed reaction is succinate + ATP + CoA = succinyl-CoA + ADP + phosphate. The enzyme catalyses GTP + succinate + CoA = succinyl-CoA + GDP + phosphate. Its pathway is carbohydrate metabolism; tricarboxylic acid cycle; succinate from succinyl-CoA (ligase route): step 1/1. In terms of biological role, succinyl-CoA synthetase functions in the citric acid cycle (TCA), coupling the hydrolysis of succinyl-CoA to the synthesis of either ATP or GTP and thus represents the only step of substrate-level phosphorylation in the TCA. The beta subunit provides nucleotide specificity of the enzyme and binds the substrate succinate, while the binding sites for coenzyme A and phosphate are found in the alpha subunit. This chain is Succinate--CoA ligase [ADP-forming] subunit beta, found in Paraburkholderia phytofirmans (strain DSM 17436 / LMG 22146 / PsJN) (Burkholderia phytofirmans).